Reading from the N-terminus, the 169-residue chain is UPF0303 protein BMEI0598 (169 aa).

This sequence belongs to the UPF0303 family.

This is UPF0303 protein BMEI0598 from Brucella melitensis biotype 1 (strain ATCC 23456 / CCUG 17765 / NCTC 10094 / 16M).